The primary structure comprises 511 residues: uncharacterized protein (511 aa).

14 consecutive transmembrane segments (helical) span residues 7–27, 46–66, 80–100, 107–127, 134–154, 163–183, 200–220, 226–246, 266–286, 301–321, 329–349, 357–377, 394–414, and 437–457; these read WVIS…NTAL, VNPI…GPLL, LPVF…ALMA, GAAT…SFPI, LLVL…LGTI, WLFF…YFFL, AGIL…IFLQ, SGYV…LLIV, VLGL…LSAF, LILL…LSAL, GMLG…WLHI, MFAA…AAGL, TAVQ…IGFF, and LFFI…CMNA. Positions 465 to 486 are disordered; the sequence is AHKPHDKAKTAPEKPAVSAQGL.

Belongs to the major facilitator superfamily.

It is found in the cell membrane. This is an uncharacterized protein from Bacillus subtilis (strain 168).